The sequence spans 477 residues: Aspartyl/glutamyl-tRNA(Asn/Gln) amidotransferase subunit B (477 aa).

The protein belongs to the GatB/GatE family. GatB subfamily. Heterotrimer of A, B and C subunits.

It carries out the reaction L-glutamyl-tRNA(Gln) + L-glutamine + ATP + H2O = L-glutaminyl-tRNA(Gln) + L-glutamate + ADP + phosphate + H(+). It catalyses the reaction L-aspartyl-tRNA(Asn) + L-glutamine + ATP + H2O = L-asparaginyl-tRNA(Asn) + L-glutamate + ADP + phosphate + 2 H(+). In terms of biological role, allows the formation of correctly charged Asn-tRNA(Asn) or Gln-tRNA(Gln) through the transamidation of misacylated Asp-tRNA(Asn) or Glu-tRNA(Gln) in organisms which lack either or both of asparaginyl-tRNA or glutaminyl-tRNA synthetases. The reaction takes place in the presence of glutamine and ATP through an activated phospho-Asp-tRNA(Asn) or phospho-Glu-tRNA(Gln). The polypeptide is Aspartyl/glutamyl-tRNA(Asn/Gln) amidotransferase subunit B (Legionella pneumophila (strain Paris)).